Here is a 354-residue protein sequence, read N- to C-terminus: Cellular communication network factor 6 (354 aa).

An N-terminal signal peptide occupies residues 1-23 (MRRLLFCTLLMTGLTQLCCRTQG). The region spanning 44–117 (RTEVCRWPCR…RYETGVCAYL (74 aa)) is the IGFBP N-terminal domain. Intrachain disulfides connect Cys48–Cys72, Cys52–Cys74, Cys54–Cys75, Cys61–Cys78, Cys86–Cys100, Cys92–Cys114, Cys209–Cys238, Cys219–Cys223, Cys247–Cys252, Cys268–Cys305, Cys285–Cys319, Cys296–Cys335, and Cys299–Cys337. Positions 208–253 (KCLVQATKWTPCSRTCGMGISNRVTNDNANCEMRKERRLCYIQPCS) constitute a TSP type-1 domain. A CTCK domain is found at 268-342 (CQPTFQLPKA…TSCVCQRDCR (75 aa)). Asn308 is a glycosylation site (N-linked (GlcNAc...) asparagine).

It belongs to the CCN family.

Its subcellular location is the secreted. The protein localises to the mitochondrion. Plays a role in mitochondrial electron transport and mitochondrial respiration. This chain is Cellular communication network factor 6, found in Mus musculus (Mouse).